An 807-amino-acid polypeptide reads, in one-letter code: Dual specificity protein kinase YAK1 (807 aa).

Residues 1-19 show a composition bias toward low complexity; sequence MNSSNNNDSSSSNSNMNNS. Residues 1–84 are disordered; it reads MNSSNNNDSS…QQQQQQQQNS (84 aa). The segment covering 20–31 has biased composition (polar residues); sequence LSPTLVTHSDAS. Phosphoserine is present on S38. The segment covering 55-84 has biased composition (low complexity); it reads NQGSQRSPQQQHQNHHQQQQQQQQQQQQNS. Phosphoserine occurs at positions 115, 118, and 127. Residues 124–180 are disordered; it reads RRKSSLVVPPARAPAPNPFQYDSYPAYTSSNTSLAGNSSGQYPSGYQQQQQQVYQQG. Residues 149 to 160 are compositionally biased toward polar residues; the sequence is AYTSSNTSLAGN. A compositionally biased stretch (low complexity) spans 161-180; sequence SSGQYPSGYQQQQQQVYQQG. A Phosphoserine modification is found at S206. Low complexity predominate over residues 214-224; it reads SNFSSLNSNTN. The tract at residues 214–254 is disordered; sequence SNFSSLNSNTNQGTNSIPVMSPYRRLSAYPPSTSPPLQPPF. 3 positions are modified to phosphoserine: S240, S245, and S247. The residue at position 288 (T288) is a Phosphothreonine. The residue at position 295 (S295) is a Phosphoserine. The region spanning 369–704 is the Protein kinase domain; the sequence is YLVLDILGQG…PQQAMLHPFI (336 aa). Residues 375–383 and K398 each bind ATP; that span reads LGQGTFGQV. The active-site Proton acceptor is the D496. Y530 is modified (phosphotyrosine). A disordered region spans residues 714 to 758; sequence FPPGSSLPGPSEKHDDAKGQQSEYGSANDSSNNAGHNYVYNPSSA. Polar residues predominate over residues 732–758; it reads GQQSEYGSANDSSNNAGHNYVYNPSSA.

Belongs to the protein kinase superfamily. CMGC Ser/Thr protein kinase family. MNB/DYRK subfamily. Post-translationally, phosphorylated; highly.

The protein localises to the cytoplasm. Its subcellular location is the nucleus. The enzyme catalyses L-seryl-[protein] + ATP = O-phospho-L-seryl-[protein] + ADP + H(+). It carries out the reaction L-threonyl-[protein] + ATP = O-phospho-L-threonyl-[protein] + ADP + H(+). The catalysed reaction is L-tyrosyl-[protein] + ATP = O-phospho-L-tyrosyl-[protein] + ADP + H(+). In terms of biological role, negative regulator of the cell cycle acting downstream of the cAMP-dependent protein kinase. Part of a glucose-sensing system involved in growth control in response to glucose availability. Phosphorylates POP2. In Saccharomyces cerevisiae (strain ATCC 204508 / S288c) (Baker's yeast), this protein is Dual specificity protein kinase YAK1 (YAK1).